Reading from the N-terminus, the 72-residue chain is uncharacterized protein (72 aa).

The helical transmembrane segment at 41–58 (FSFLVHIMCGLTLTSYVI) threads the bilayer.

It is found in the membrane. This is an uncharacterized protein from Dictyostelium discoideum (Social amoeba).